Here is a 270-residue protein sequence, read N- to C-terminus: MAILSRLLTTVTLGSLLTSAVAQSSGCGKQPTLTNGVQNINGREYILNIPEGYDSSKQYKLIFGLHWLGGSMNDVVSGNSIEPWYGLESRAEGSAIFVAPNGLNAGWANNGGEDTALMDAIIEAVEADLCIDQSSRFATGFSFGGGMSYALACARASKFRAVSVLSGGVISGCDGGNDPIAYLGIHGINDPVLPIDGGIEMANKFVQNNGCQSADVGRPNSGSGQSVRTDFQGCSRPVSFIAYDGGHEGAPLGVGNPLAPDATWEFFTGA.

Positions 1 to 22 (MAILSRLLTTVTLGSLLTSAVA) are cleaved as a signal peptide.

This sequence belongs to the faeC family.

The protein resides in the secreted. The catalysed reaction is feruloyl-polysaccharide + H2O = ferulate + polysaccharide.. In terms of biological role, involved in degradation of plant cell walls. Hydrolyzes the feruloyl-arabinose ester bond in arabinoxylans, and the feruloyl-galactose ester bond in pectin. Active against paranitrophenyl-acetate, methyl ferulate and wheat arabinoxylan. The protein is Probable feruloyl esterase C (faeC) of Aspergillus terreus (strain NIH 2624 / FGSC A1156).